The sequence spans 566 residues: Bacillolysin (566 aa).

The first 27 residues, 1 to 27 (MKKKSLALVLATGMAVTTFGGTGSAFA), serve as a signal peptide directing secretion. Positions 28–249 (DSKNVLSTKK…KQDAKAVVKP (222 aa)) are cleaved as a propeptide — activation peptide. Asp307, Asp309, Val311, and Asp388 together coordinate Ca(2+). His392 is a binding site for Zn(2+). Glu393 is an active-site residue. His396 and Glu416 together coordinate Zn(2+). 9 residues coordinate Ca(2+): Glu427, Asn433, Asp435, Glu437, Glu440, Tyr443, Thr444, Lys447, and Asp450. His481 (proton donor) is an active-site residue.

Belongs to the peptidase M4 family. The cofactor is Ca(2+). Zn(2+) is required as a cofactor.

Its subcellular location is the secreted. It catalyses the reaction Similar, but not identical, to that of thermolysin.. Extracellular zinc metalloprotease. This chain is Bacillolysin (npr), found in Bacillus cereus.